The following is a 264-amino-acid chain: Thymidylate synthase (264 aa).

Position 21 (Arg-21) interacts with dUMP. His-51 lines the (6R)-5,10-methylene-5,6,7,8-tetrahydrofolate pocket. 126–127 contributes to the dUMP binding site; the sequence is RR. The active-site Nucleophile is Cys-146. DUMP contacts are provided by residues 166 to 169, Asn-177, and 207 to 209; these read RSAD and HIY. Residue Asp-169 participates in (6R)-5,10-methylene-5,6,7,8-tetrahydrofolate binding. Residue Ala-263 participates in (6R)-5,10-methylene-5,6,7,8-tetrahydrofolate binding.

Belongs to the thymidylate synthase family. Bacterial-type ThyA subfamily. In terms of assembly, homodimer.

Its subcellular location is the cytoplasm. The catalysed reaction is dUMP + (6R)-5,10-methylene-5,6,7,8-tetrahydrofolate = 7,8-dihydrofolate + dTMP. Its pathway is pyrimidine metabolism; dTTP biosynthesis. Functionally, catalyzes the reductive methylation of 2'-deoxyuridine-5'-monophosphate (dUMP) to 2'-deoxythymidine-5'-monophosphate (dTMP) while utilizing 5,10-methylenetetrahydrofolate (mTHF) as the methyl donor and reductant in the reaction, yielding dihydrofolate (DHF) as a by-product. This enzymatic reaction provides an intracellular de novo source of dTMP, an essential precursor for DNA biosynthesis. This is Thymidylate synthase from Porphyromonas gingivalis (strain ATCC BAA-308 / W83).